Here is a 1049-residue protein sequence, read N- to C-terminus: Vacuolar membrane protease (1049 aa).

The Cytoplasmic portion of the chain corresponds to methionine 1–proline 11. A helical membrane pass occupies residues methionine 12 to isoleucine 32. Topologically, residues glutamine 33 to threonine 438 are vacuolar. Asparagine 50 carries N-linked (GlcNAc...) asparagine glycosylation. The disordered stretch occupies residues aspartate 114–tyrosine 135. The N-linked (GlcNAc...) asparagine glycan is linked to asparagine 157. Zn(2+) contacts are provided by histidine 221 and aspartate 233. Residue glutamate 267 is the Proton acceptor of the active site. 3 residues coordinate Zn(2+): glutamate 268, glutamate 293, and histidine 365. Residues leucine 439–tyrosine 459 traverse the membrane as a helical segment. The Cytoplasmic segment spans residues leucine 460 to tyrosine 495. A helical membrane pass occupies residues proline 496 to isoleucine 516. Residues asparagine 517–tyrosine 526 are Vacuolar-facing. Residues serine 527 to cysteine 547 traverse the membrane as a helical segment. Residues asparagine 548 to arginine 557 are Cytoplasmic-facing. Residues glycine 558 to tyrosine 578 traverse the membrane as a helical segment. Residues glutamate 579–serine 585 lie on the Vacuolar side of the membrane. Residues glycine 586 to glycine 606 traverse the membrane as a helical segment. Residues glutamate 607 to tyrosine 740 lie on the Cytoplasmic side of the membrane. The tract at residues serine 621–serine 686 is disordered. The segment covering glutamine 622 to histidine 633 has biased composition (basic and acidic residues). The span at glycine 655–valine 664 shows a compositional bias: acidic residues. A helical membrane pass occupies residues leucine 741 to alanine 761. At leucine 762 to leucine 773 the chain is on the vacuolar side. Residues leucine 774–isoleucine 794 form a helical membrane-spanning segment. The Cytoplasmic segment spans residues histidine 795–methionine 801. A helical membrane pass occupies residues proline 802–phenylalanine 822. At serine 823–valine 1049 the chain is on the vacuolar side. The N-linked (GlcNAc...) asparagine glycan is linked to asparagine 914.

It belongs to the peptidase M28 family. Zn(2+) is required as a cofactor.

The protein localises to the vacuole membrane. Its function is as follows. May be involved in vacuolar sorting and osmoregulation. The protein is Vacuolar membrane protease of Botryotinia fuckeliana (strain B05.10) (Noble rot fungus).